The primary structure comprises 465 residues: uncharacterized protein (465 aa).

3 disordered regions span residues 95 to 173, 407 to 426, and 443 to 465; these read STST…RKDP, QEME…KSDK, and ANPI…SSKK. A compositionally biased stretch (basic residues) spans 118-137; it reads KTGSKKVTRSKKSKKTKRRS. The segment covering 138 to 150 has biased composition (low complexity); sequence STTVTTTTISNSK. A compositionally biased stretch (basic and acidic residues) spans 153-173; sequence TPDKDKDSKDQRKQRTKRKDP. Positions 451–465 are enriched in basic residues; that stretch reads MARRNRRSKGSSSKK.

This is an uncharacterized protein from Caenorhabditis elegans.